The sequence spans 906 residues: Inter-alpha-trypsin inhibitor heavy chain H1 (906 aa).

The N-terminal stretch at 1–22 (MGLRGLLCVCLVSLLALQAVAA) is a signal peptide. Positions 23–29 (QGSPTRN) are excised as a propeptide. A VIT domain is found at 32–161 (GGKKRMAVDA…KATFRLTYEE (130 aa)). S-linked (Hex...) cysteine glycosylation is present at Cys-55. Ser-124 bears the Phosphoserine mark. In terms of domain architecture, VWFA spans 287 to 470 (NVVFVIDISS…QQLQGFYEQV (184 aa)). Phosphothreonine occurs at positions 397 and 402. The N-linked (GlcNAc...) asparagine glycan is linked to Asn-583. An O-linked (GalNAc...) serine glycan is attached at Ser-643. O-linked (GalNAc...) threonine glycosylation occurs at Thr-648. Position 667 is an aspartate 1-(chondroitin 4-sulfate)-ester (Asp-667). Positions 668-906 (PHFLIHVPQK…HTDYIVPDIF (239 aa)) are excised as a propeptide. Asn-745 is a glycosylation site (N-linked (GlcNAc...) asparagine).

The protein belongs to the ITIH family. As to quaternary structure, I-alpha-I plasma protease inhibitors are assembled from one or two heavy chains (HC) and one light chain, bikunin. Inter-alpha-inhibitor (I-alpha-I) is composed of ITIH1/HC1, ITIH2/HC2 and bikunin. Interacts with TNFAIP6 (via Link and CUB domains). Post-translationally, heavy chains are linked to bikunin via chondroitin 4-sulfate esterified to the alpha-carboxyl of the C-terminal aspartate after propeptide cleavage. In terms of processing, the S-linked glycan is composed of two 6-carbon sugars, possibly Glc or Gal.

Its subcellular location is the secreted. Its function is as follows. May act as a carrier of hyaluronan in serum or as a binding protein between hyaluronan and other matrix protein, including those on cell surfaces in tissues to regulate the localization, synthesis and degradation of hyaluronan which are essential to cells undergoing biological processes. The chain is Inter-alpha-trypsin inhibitor heavy chain H1 (ITIH1) from Bos taurus (Bovine).